The primary structure comprises 250 residues: Osmotin-like protein OSML15 (250 aa).

Residues 1-21 form the signal peptide; it reads MSHLTTCLVFFLLAFVTYTNA. 8 cysteine pairs are disulfide-bonded: Cys31/Cys226, Cys73/Cys83, Cys88/Cys94, Cys142/Cys214, Cys147/Cys197, Cys155/Cys165, Cys169/Cys178, and Cys179/Cys184.

The protein belongs to the thaumatin family.

In Solanum commersonii (Commerson's wild potato), this protein is Osmotin-like protein OSML15.